Reading from the N-terminus, the 265-residue chain is Exosome complex component RRP42 (265 aa).

Belongs to the RNase PH family. As to quaternary structure, component of the RNA exosome complex. Specifically part of the catalytically inactive RNA exosome core complex (Exo-9) which may associate with the catalytic subunits RRP6 and DIS3 in cytoplasmic- and nuclear-specific RNA exosome complex forms. Exo-9 is formed by a hexameric base ring of RNase PH domain-containing subunits and a cap ring consisting of CSL4, RRP4 and RRP40.

The protein localises to the cytoplasm. Its subcellular location is the nucleus. The protein resides in the nucleolus. Its function is as follows. Non-catalytic component of the RNA exosome complex which has 3'-&gt;5' exoribonuclease activity and participates in a multitude of cellular RNA processing and degradation events. In the nucleus, the RNA exosome complex is involved in proper maturation of stable RNA species such as rRNA, snRNA and snoRNA, in the elimination of RNA processing by-products and non-coding 'pervasive' transcripts, such as antisense RNA species and cryptic unstable transcripts (CUTs), and of mRNAs with processing defects, thereby limiting or excluding their export to the cytoplasm. In the cytoplasm, the RNA exosome complex is involved in general mRNA turnover and in RNA surveillance pathways, preventing translation of aberrant mRNAs. The catalytic inactive RNA exosome core complex of 9 subunits (Exo-9) is proposed to play a pivotal role in the binding and presentation of RNA for ribonucleolysis, and to serve as a scaffold for the association with catalytic subunits and accessory proteins or complexes. RRP42 is part of the hexameric ring of RNase PH domain-containing subunits proposed to form a central channel which threads RNA substrates for degradation. This chain is Exosome complex component RRP42 (RRP42), found in Saccharomyces cerevisiae (strain ATCC 204508 / S288c) (Baker's yeast).